A 616-amino-acid chain; its full sequence is Chaperone protein HscA (616 aa).

It belongs to the heat shock protein 70 family.

In terms of biological role, chaperone involved in the maturation of iron-sulfur cluster-containing proteins. Has a low intrinsic ATPase activity which is markedly stimulated by HscB. Involved in the maturation of IscU. This is Chaperone protein HscA from Salmonella heidelberg (strain SL476).